Reading from the N-terminus, the 576-residue chain is Acetylcholine receptor subunit alpha-like 2 (576 aa).

An N-terminal signal peptide occupies residues 1–21 (MAPGCCTTRPRPIALLAHIWR). The Extracellular portion of the chain corresponds to 22 to 261 (HCKPLCLLLV…FFNITLRRKT (240 aa)). Residue asparagine 65 is glycosylated (N-linked (GlcNAc...) asparagine). 2 cysteine pairs are disulfide-bonded: cysteine 169-cysteine 183 and cysteine 243-cysteine 244. Residue asparagine 254 is glycosylated (N-linked (GlcNAc...) asparagine). The next 3 membrane-spanning stretches (helical) occupy residues 262–285 (LFYT…VFYL), 293–311 (IALC…LLIS), and 327–346 (YLLF…IIIL). Residues 347-526 (NIHYRKPSTH…WGFVAMVMDR (180 aa)) lie on the Cytoplasmic side of the membrane. Residues 527–545 (LFLWLFMIASLVGTFVILG) form a helical membrane-spanning segment. Residue asparagine 570 is glycosylated (N-linked (GlcNAc...) asparagine).

It belongs to the ligand-gated ion channel (TC 1.A.9) family. Acetylcholine receptor (TC 1.A.9.1) subfamily. As to expression, CNS in embryos.

The protein resides in the postsynaptic cell membrane. The protein localises to the cell membrane. Its function is as follows. After binding acetylcholine, the AChR responds by an extensive change in conformation that affects all subunits and leads to opening of an ion-conducting channel across the plasma membrane. This chain is Acetylcholine receptor subunit alpha-like 2 (nAChRalpha2), found in Drosophila melanogaster (Fruit fly).